Here is a 264-residue protein sequence, read N- to C-terminus: MNKLKLHGFNNLTKSLGFCIYDICYAQTFADRDGYIAYIDDEYNADRLTEILRETCSIIGANILNIARQDYNPQGASVTILISEEAIDPRDVDTSEHPGPLPDSIVAHLDKSHICVHTYPESHPTEGLCTFRADIEVSTCGIISPLNALNYLIHQLESDIVTIDYRVRGFTRDVNGVKHYIDHQINSIQNFMCKDIQSLYHMMDVNVYQENIFHTKMMLKDFDLKHYLFNSHPEQLSVQEKDLITKRLYKEMQEIYYGRNVVEV.

Ser112 serves as the catalytic Schiff-base intermediate with substrate; via pyruvic acid. Ser112 carries the post-translational modification Pyruvic acid (Ser); by autocatalysis. His117 functions as the Proton acceptor; for processing activity in the catalytic mechanism. Cys140 serves as the catalytic Proton donor; for catalytic activity.

Belongs to the prokaryotic AdoMetDC family. Type 2 subfamily. Heterooctamer of four alpha and four beta chains arranged as a tetramer of alpha/beta heterodimers. Requires pyruvate as cofactor. In terms of processing, is synthesized initially as an inactive proenzyme. Formation of the active enzyme involves a self-maturation process in which the active site pyruvoyl group is generated from an internal serine residue via an autocatalytic post-translational modification. Two non-identical subunits are generated from the proenzyme in this reaction, and the pyruvate is formed at the N-terminus of the alpha chain, which is derived from the carboxyl end of the proenzyme. The post-translation cleavage follows an unusual pathway, termed non-hydrolytic serinolysis, in which the side chain hydroxyl group of the serine supplies its oxygen atom to form the C-terminus of the beta chain, while the remainder of the serine residue undergoes an oxidative deamination to produce ammonia and the pyruvoyl group blocking the N-terminus of the alpha chain.

The enzyme catalyses S-adenosyl-L-methionine + H(+) = S-adenosyl 3-(methylsulfanyl)propylamine + CO2. It functions in the pathway amine and polyamine biosynthesis; S-adenosylmethioninamine biosynthesis; S-adenosylmethioninamine from S-adenosyl-L-methionine: step 1/1. In terms of biological role, catalyzes the decarboxylation of S-adenosylmethionine to S-adenosylmethioninamine (dcAdoMet), the propylamine donor required for the synthesis of the polyamines spermine and spermidine from the diamine putrescine. This chain is S-adenosylmethionine decarboxylase proenzyme, found in Hamiltonella defensa subsp. Acyrthosiphon pisum (strain 5AT).